Reading from the N-terminus, the 142-residue chain is Large ribosomal subunit protein uL11 (142 aa).

The protein belongs to the universal ribosomal protein uL11 family. In terms of assembly, part of the ribosomal stalk of the 50S ribosomal subunit. Interacts with L10 and the large rRNA to form the base of the stalk. L10 forms an elongated spine to which L12 dimers bind in a sequential fashion forming a multimeric L10(L12)X complex. Post-translationally, one or more lysine residues are methylated.

Its function is as follows. Forms part of the ribosomal stalk which helps the ribosome interact with GTP-bound translation factors. This chain is Large ribosomal subunit protein uL11, found in Shewanella sp. (strain W3-18-1).